The primary structure comprises 549 residues: Glucose-6-phosphate isomerase (549 aa).

An N6-acetyllysine mark is found at lysine 80, lysine 228, and lysine 234. The active-site Proton donor is glutamate 355. Residues histidine 386 and lysine 514 contribute to the active site.

It belongs to the GPI family.

The protein localises to the cytoplasm. It carries out the reaction alpha-D-glucose 6-phosphate = beta-D-fructose 6-phosphate. It participates in carbohydrate biosynthesis; gluconeogenesis. It functions in the pathway carbohydrate degradation; glycolysis; D-glyceraldehyde 3-phosphate and glycerone phosphate from D-glucose: step 2/4. Functionally, catalyzes the reversible isomerization of glucose-6-phosphate to fructose-6-phosphate. The chain is Glucose-6-phosphate isomerase from Escherichia coli (strain SMS-3-5 / SECEC).